The chain runs to 364 residues: Protein BRI1-5 ENHANCED 1 (364 aa).

Over residues methionine 1–asparagine 11 the composition is skewed to acidic residues. Residues methionine 1–lysine 22 are disordered. Residues glycine 44 to valine 49, arginine 69, aspartate 98 to leucine 99, tyrosine 202, lysine 206, valine 232, and serine 244 contribute to the NADP(+) site. The active-site Proton donor is lysine 206.

It belongs to the NAD(P)-dependent epimerase/dehydratase family. Monomer. In terms of tissue distribution, mainly present in cell elongating-containing tissues. Strongly expressed in roots and flowers, also observed in petioles, stems, leaves and siliques.

It is found in the cytoplasm. The protein operates within plant hormone biosynthesis; brassinosteroid biosynthesis. Its function is as follows. Element of the brassinosteroid metabolic pathway that regulates typhasterol (TY), castasterone (CS) and brassinolide (BL) levels. Involved in the control of organ elongation. In Arabidopsis thaliana (Mouse-ear cress), this protein is Protein BRI1-5 ENHANCED 1.